A 456-amino-acid polypeptide reads, in one-letter code: Bifunctional protein GlmU (456 aa).

The pyrophosphorylase stretch occupies residues 1–228 (MPQNTLNIVI…SHLAAGVNNK (228 aa)). UDP-N-acetyl-alpha-D-glucosamine contacts are provided by residues 11 to 14 (LAAG), Lys-25, Gln-75, 80 to 81 (GT), 102 to 104 (YGD), Gly-138, Glu-153, Asn-168, and Asn-226. Asp-104 lines the Mg(2+) pocket. Asn-226 lines the Mg(2+) pocket. Positions 229–249 (LQLAELERIFQTGQAQELLKA) are linker. The interval 250-456 (GVTLHDPARF…GWVRPEKDKQ (207 aa)) is N-acetyltransferase. UDP-N-acetyl-alpha-D-glucosamine contacts are provided by Arg-332 and Lys-350. Residue His-362 is the Proton acceptor of the active site. Residues Tyr-365 and Asn-376 each coordinate UDP-N-acetyl-alpha-D-glucosamine. Acetyl-CoA contacts are provided by residues Ala-379, 385 to 386 (NY), Ser-404, Ala-422, and Arg-439.

In the N-terminal section; belongs to the N-acetylglucosamine-1-phosphate uridyltransferase family. This sequence in the C-terminal section; belongs to the transferase hexapeptide repeat family. As to quaternary structure, homotrimer. Requires Mg(2+) as cofactor.

The protein resides in the cytoplasm. The enzyme catalyses alpha-D-glucosamine 1-phosphate + acetyl-CoA = N-acetyl-alpha-D-glucosamine 1-phosphate + CoA + H(+). It catalyses the reaction N-acetyl-alpha-D-glucosamine 1-phosphate + UTP + H(+) = UDP-N-acetyl-alpha-D-glucosamine + diphosphate. The protein operates within nucleotide-sugar biosynthesis; UDP-N-acetyl-alpha-D-glucosamine biosynthesis; N-acetyl-alpha-D-glucosamine 1-phosphate from alpha-D-glucosamine 6-phosphate (route II): step 2/2. It participates in nucleotide-sugar biosynthesis; UDP-N-acetyl-alpha-D-glucosamine biosynthesis; UDP-N-acetyl-alpha-D-glucosamine from N-acetyl-alpha-D-glucosamine 1-phosphate: step 1/1. Its pathway is bacterial outer membrane biogenesis; LPS lipid A biosynthesis. Catalyzes the last two sequential reactions in the de novo biosynthetic pathway for UDP-N-acetylglucosamine (UDP-GlcNAc). The C-terminal domain catalyzes the transfer of acetyl group from acetyl coenzyme A to glucosamine-1-phosphate (GlcN-1-P) to produce N-acetylglucosamine-1-phosphate (GlcNAc-1-P), which is converted into UDP-GlcNAc by the transfer of uridine 5-monophosphate (from uridine 5-triphosphate), a reaction catalyzed by the N-terminal domain. The protein is Bifunctional protein GlmU of Neisseria meningitidis serogroup C (strain 053442).